The sequence spans 143 residues: Transcriptional regulator MraZ (143 aa).

2 consecutive SpoVT-AbrB domains span residues 5–47 (EYDH…TLDE) and 76–119 (AVEV…DRET).

The protein belongs to the MraZ family. In terms of assembly, forms oligomers.

The protein localises to the cytoplasm. The protein resides in the nucleoid. In Staphylococcus aureus (strain Mu3 / ATCC 700698), this protein is Transcriptional regulator MraZ.